Reading from the N-terminus, the 200-residue chain is Transcription factor FapR (200 aa).

Belongs to the FapR family.

Its function is as follows. Transcriptional factor involved in regulation of membrane lipid biosynthesis by repressing genes involved in fatty acid and phospholipid metabolism. The polypeptide is Transcription factor FapR (Caldanaerobacter subterraneus subsp. tengcongensis (strain DSM 15242 / JCM 11007 / NBRC 100824 / MB4) (Thermoanaerobacter tengcongensis)).